The primary structure comprises 199 residues: MKQSHFFAHLSRLKLINRWPLMRNVRTENVSEHSLQVAMVAHALAAIKNRKFGGNVNAERIALLAMYHDASEVLTGDLPTPVKYFNAQIAQEYKAIEKIAQQKLVDMVPEELRDIFAPLIDEHAYSDEEKSLVKQADALCAYLKCLEELAAGNNEFLLAKTRLEATLEARRSQEMDYFMEVFVPSFHLSLDEISQDSPL.

Substrate is bound by residues 18–19 (RW) and H33. In terms of domain architecture, HD spans 30 to 142 (VSEHSLQVAM…VKQADALCAY (113 aa)). The a divalent metal cation site is built by H33, H68, and D69. Residues D69, 77–80 (DLPT), and D137 contribute to the substrate site. D137 provides a ligand contact to a divalent metal cation.

Belongs to the 5DNU family. In terms of assembly, homodimer. A divalent metal cation is required as a cofactor.

The protein localises to the cytoplasm. The enzyme catalyses a 2'-deoxyribonucleoside 5'-phosphate + H2O = a 2'-deoxyribonucleoside + phosphate. In terms of biological role, catalyzes the strictly specific dephosphorylation of 2'-deoxyribonucleoside 5'-monophosphates. This is 5'-deoxynucleotidase YfbR from Shigella flexneri serotype 5b (strain 8401).